The primary structure comprises 222 residues: Apoptosis regulator OPG045 (222 aa).

The protein belongs to the orthopoxvirus OPG045 family. As to quaternary structure, homodimer. Interacts with host pro-apoptotic protein BCL2L11 (via BH3 domain). Interacts with host NLRP1. Interacts with host BAK.

Its subcellular location is the host mitochondrion outer membrane. The protein resides in the host cytoplasm. Functionally, plays a role in evading host innate immune response by inhibiting host inflammasome activation. Interacts with and inhibits NLR-mediated interleukin-1 beta/IL1B production in infected cells. At the host mitochondria outer membrane, interacts with the BH3 domain of host BAK and prevents BAK from binding active BAX. In turn, host apoptosis is inhibited. The chain is Apoptosis regulator OPG045 (OPG045) from Homo sapiens (Human).